Reading from the N-terminus, the 261-residue chain is Large ribosomal subunit protein uL10m (261 aa).

Residues 1–28 (MAAAVAGMLRGGLLPQAGRLPTLQTVRY) constitute a mitochondrion transit peptide. The disordered stretch occupies residues 242–261 (EKDSVMSANGKPDPDTVPDS).

This sequence belongs to the universal ribosomal protein uL10 family. Component of the mitochondrial large ribosomal subunit (mt-LSU). Mature mammalian 55S mitochondrial ribosomes consist of a small (28S) and a large (39S) subunit. The 28S small subunit contains a 12S ribosomal RNA (12S mt-rRNA) and 30 different proteins. The 39S large subunit contains a 16S rRNA (16S mt-rRNA), a copy of mitochondrial valine transfer RNA (mt-tRNA(Val)), which plays an integral structural role, and 52 different proteins. uL10m contributes a single cysteine residue to a zinc-binding site with mL66.

The protein resides in the mitochondrion. In Homo sapiens (Human), this protein is Large ribosomal subunit protein uL10m (MRPL10).